A 543-amino-acid polypeptide reads, in one-letter code: Chaperonin GroEL 2 (543 aa).

ATP-binding positions include 29–32 (TLGP), 86–90 (DGTTT), G413, 479–481 (NAA), and D495.

This sequence belongs to the chaperonin (HSP60) family. As to quaternary structure, forms a cylinder of 14 subunits composed of two heptameric rings stacked back-to-back. Interacts with the co-chaperonin GroES.

Its subcellular location is the cytoplasm. The enzyme catalyses ATP + H2O + a folded polypeptide = ADP + phosphate + an unfolded polypeptide.. Its function is as follows. Together with its co-chaperonin GroES, plays an essential role in assisting protein folding. The GroEL-GroES system forms a nano-cage that allows encapsulation of the non-native substrate proteins and provides a physical environment optimized to promote and accelerate protein folding. The chain is Chaperonin GroEL 2 from Prochlorococcus marinus (strain NATL1A).